A 243-amino-acid chain; its full sequence is Probable phosphatase CBO3379/CLC_3322 (243 aa).

Histidine 8, histidine 10, histidine 16, histidine 41, glutamate 74, histidine 102, histidine 132, aspartate 192, and histidine 194 together coordinate Zn(2+).

The protein belongs to the PHP family. Zn(2+) serves as cofactor.

The sequence is that of Probable phosphatase CBO3379/CLC_3322 from Clostridium botulinum (strain Hall / ATCC 3502 / NCTC 13319 / Type A).